Reading from the N-terminus, the 342-residue chain is Platelet-activating factor receptor (342 aa).

The Extracellular segment spans residues 1 to 16 (MEPNNSFRVDSEFRYT). The N-linked (GlcNAc...) asparagine glycan is linked to asparagine 4. Residues 17–38 (LFPIFYSIVFVLGVIANSYVLW) traverse the membrane as a helical segment. The Cytoplasmic portion of the chain corresponds to 39–54 (VFARLYPSKKFNEIKI). The chain crosses the membrane as a helical span at residues 55 to 74 (FMVNLTMADLLFLVTLPLWI). Residues 75–91 (VYYYNQGDWILPKFLCN) lie on the Extracellular side of the membrane. A disulfide bond links cysteine 90 and cysteine 173. Residues 92 to 113 (LAGCFFFINTYCSVAFLAVITY) traverse the membrane as a helical segment. Topologically, residues 114 to 133 (NRFQAVTRPIKTAQATTRKR) are cytoplasmic. A helical membrane pass occupies residues 134-155 (GILLSLIIWVSIVGAASYFFVL). Residues 156 to 184 (DSTNREPNKTGSANITRCFEHYEKGSIPV) lie on the Extracellular side of the membrane. N-linked (GlcNAc...) asparagine glycosylation is found at asparagine 163 and asparagine 169. The helical transmembrane segment at 185–205 (LTIHIFLVFSFFLVFLIILFC) threads the bilayer. Topologically, residues 206–233 (NLVIIRTLLTQQVQIQRNAEVKRRALWM) are cytoplasmic. The chain crosses the membrane as a helical span at residues 234–254 (VCTVLAVFIICFVPHHLVQLP). Residues 255–276 (WTLAELGFQDTDFHQAINDAHQ) are Extracellular-facing. Residues 277–296 (VTLCLLSTNCVLDPIIYCFL) form a helical membrane-spanning segment. At 297 to 342 (TKKFRKHLTEKLYSMRESRKCSRATSETGTEVVMQLKDVPVKSLKY) the chain is on the cytoplasmic side.

It belongs to the G-protein coupled receptor 1 family. In terms of assembly, interacts with ARRB1. In terms of tissue distribution, found in oviductal epithelial and stroma cells. Levels in the oviduct are raised at days 2-4 of both pregnancy and of the estrus cycle. In the endometrium, localization is predominantly to the apical borders of glandular and luminal epithelial cells. Expressed at lower levels in endometrial stromal cells. Levels in the endometrium are increased at day 20 of pregnancy (at protein level).

The protein resides in the cell membrane. Receptor for platelet activating factor, a chemotactic phospholipid mediator that possesses potent inflammatory, smooth-muscle contractile and hypotensive activity. Seems to mediate its action via a G protein that activates a phosphatidylinositol-calcium second messenger system. May be involved in the morphological and physical modifications of the oviduct and uterus during the estrus cycle and early pregnancy. The chain is Platelet-activating factor receptor from Bos taurus (Bovine).